The chain runs to 336 residues: Serpentine receptor class alpha-10 (336 aa).

Residues 1 to 28 are Extracellular-facing; that stretch reads MGPITANSSKCATEDQMILQTSLLLRIN. A helical membrane pass occupies residues 29 to 49; sequence VIIMTIVAIITFILTYKALFI. Over 50 to 61 the chain is Cytoplasmic; sequence LKIRPIFHSSTK. A helical membrane pass occupies residues 62–82; it reads ILLYTSLLFVNVHAVIFMVIQ. Residues 83–107 lie on the Extracellular side of the membrane; that stretch reads NTALIRSFTLSDKPCEIMRTTLECR. Residues 108 to 128 traverse the membrane as a helical segment; the sequence is FQNHVLIFGIAGVNFNQFGLT. The Cytoplasmic portion of the chain corresponds to 129 to 148; sequence VDRLLATIIPQSYSHMGALP. The chain crosses the membrane as a helical span at residues 149–169; the sequence is GVILSVLVVACSIAAPLIIAI. Residues 170–192 lie on the Extracellular side of the membrane; it reads GDPYDDIVPNCFFFPEHSAPRAN. A helical membrane pass occupies residues 193–213; that stretch reads IFLVTLSTLVITSIFLNFIII. At 214–243 the chain is on the cytoplasmic side; that stretch reads YANKKLEKGCRTRFYVTQRYQKREALISTR. A helical membrane pass occupies residues 244–264; the sequence is IISYIAASQFLGLTLYSTMVL. Residues 265–280 are Extracellular-facing; it reads TLRLHKSMIPISIYHN. The chain crosses the membrane as a helical span at residues 281 to 301; it reads MVWWAYTVPFAAVSLPALLIY. Over 302-336 the chain is Cytoplasmic; that stretch reads RINQVGSNRKRVINRITAKVETQEEHMKSLKELWA.

It belongs to the nematode receptor-like protein sra family. In terms of tissue distribution, expressed in the URX sensory neuron, the ALA interneuron and in additional interneurons, pharyngeal neurons and muscle.

The protein localises to the membrane. The polypeptide is Serpentine receptor class alpha-10 (sra-10) (Caenorhabditis elegans).